The following is a 187-amino-acid chain: Elongation factor P (187 aa).

It belongs to the elongation factor P family.

It localises to the cytoplasm. The protein operates within protein biosynthesis; polypeptide chain elongation. Functionally, involved in peptide bond synthesis. Stimulates efficient translation and peptide-bond synthesis on native or reconstituted 70S ribosomes in vitro. Probably functions indirectly by altering the affinity of the ribosome for aminoacyl-tRNA, thus increasing their reactivity as acceptors for peptidyl transferase. This is Elongation factor P from Mycobacteroides abscessus (strain ATCC 19977 / DSM 44196 / CCUG 20993 / CIP 104536 / JCM 13569 / NCTC 13031 / TMC 1543 / L948) (Mycobacterium abscessus).